A 260-amino-acid chain; its full sequence is Proteasome subunit alpha (260 aa).

Positions 237–248 are enriched in low complexity; the sequence is ASTDAPAAAADS. Residues 237-260 are disordered; it reads ASTDAPAAAADSADVEERPDSEAP. Over residues 251-260 the composition is skewed to basic and acidic residues; sequence VEERPDSEAP.

Belongs to the peptidase T1A family. The 20S proteasome core is composed of 14 alpha and 14 beta subunits that assemble into four stacked heptameric rings, resulting in a barrel-shaped structure. The two inner rings, each composed of seven catalytic beta subunits, are sandwiched by two outer rings, each composed of seven alpha subunits. The catalytic chamber with the active sites is on the inside of the barrel. Has a gated structure, the ends of the cylinder being occluded by the N-termini of the alpha-subunits. Is capped by the proteasome-associated ATPase, ARC.

It localises to the cytoplasm. It functions in the pathway protein degradation; proteasomal Pup-dependent pathway. Its activity is regulated as follows. The formation of the proteasomal ATPase ARC-20S proteasome complex, likely via the docking of the C-termini of ARC into the intersubunit pockets in the alpha-rings, may trigger opening of the gate for substrate entry. Interconversion between the open-gate and close-gate conformations leads to a dynamic regulation of the 20S proteasome proteolysis activity. Component of the proteasome core, a large protease complex with broad specificity involved in protein degradation. This is Proteasome subunit alpha from Salinispora tropica (strain ATCC BAA-916 / DSM 44818 / JCM 13857 / NBRC 105044 / CNB-440).